The chain runs to 307 residues: Aspartate carbamoyltransferase catalytic subunit (307 aa).

R59 and T60 together coordinate carbamoyl phosphate. L-aspartate is bound at residue K87. Residues R109, H137, and Q140 each contribute to the carbamoyl phosphate site. The L-aspartate site is built by R173 and R223. G266 and P267 together coordinate carbamoyl phosphate.

This sequence belongs to the aspartate/ornithine carbamoyltransferase superfamily. ATCase family. Heterododecamer (2C3:3R2) of six catalytic PyrB chains organized as two trimers (C3), and six regulatory PyrI chains organized as three dimers (R2).

The enzyme catalyses carbamoyl phosphate + L-aspartate = N-carbamoyl-L-aspartate + phosphate + H(+). The protein operates within pyrimidine metabolism; UMP biosynthesis via de novo pathway; (S)-dihydroorotate from bicarbonate: step 2/3. Its function is as follows. Catalyzes the condensation of carbamoyl phosphate and aspartate to form carbamoyl aspartate and inorganic phosphate, the committed step in the de novo pyrimidine nucleotide biosynthesis pathway. In Helicobacter pylori (strain G27), this protein is Aspartate carbamoyltransferase catalytic subunit.